The following is a 93-amino-acid chain: Cobalt transport protein CbiN (93 aa).

2 consecutive transmembrane segments (helical) span residues 5-25 (LMLLAMVVALVILPFFINHGG) and 63-83 (LLFTLQGSLGAAVIFYILGYC).

Belongs to the CbiN family. Forms an energy-coupling factor (ECF) transporter complex composed of an ATP-binding protein (A component, CbiO), a transmembrane protein (T component, CbiQ) and 2 possible substrate-capture proteins (S components, CbiM and CbiN) of unknown stoichimetry.

The protein localises to the cell inner membrane. It functions in the pathway cofactor biosynthesis; adenosylcobalamin biosynthesis. Its function is as follows. Part of the energy-coupling factor (ECF) transporter complex CbiMNOQ involved in cobalt import. The chain is Cobalt transport protein CbiN from Salmonella newport (strain SL254).